The sequence spans 91 residues: Small ribosomal subunit protein bS16 (91 aa).

The protein belongs to the bacterial ribosomal protein bS16 family.

This Limosilactobacillus fermentum (strain NBRC 3956 / LMG 18251) (Lactobacillus fermentum) protein is Small ribosomal subunit protein bS16.